The chain runs to 153 residues: 6,7-dimethyl-8-ribityllumazine synthase (153 aa).

Residues tryptophan 22, serine 56–glutamate 58, and alanine 80–isoleucine 82 contribute to the 5-amino-6-(D-ribitylamino)uracil site. Alanine 85 to threonine 86 contributes to the (2S)-2-hydroxy-3-oxobutyl phosphate binding site. Catalysis depends on histidine 88, which acts as the Proton donor. Leucine 113 contributes to the 5-amino-6-(D-ribitylamino)uracil binding site. Position 127 (arginine 127) interacts with (2S)-2-hydroxy-3-oxobutyl phosphate.

This sequence belongs to the DMRL synthase family.

It catalyses the reaction (2S)-2-hydroxy-3-oxobutyl phosphate + 5-amino-6-(D-ribitylamino)uracil = 6,7-dimethyl-8-(1-D-ribityl)lumazine + phosphate + 2 H2O + H(+). It participates in cofactor biosynthesis; riboflavin biosynthesis; riboflavin from 2-hydroxy-3-oxobutyl phosphate and 5-amino-6-(D-ribitylamino)uracil: step 1/2. In terms of biological role, catalyzes the formation of 6,7-dimethyl-8-ribityllumazine by condensation of 5-amino-6-(D-ribitylamino)uracil with 3,4-dihydroxy-2-butanone 4-phosphate. This is the penultimate step in the biosynthesis of riboflavin. This is 6,7-dimethyl-8-ribityllumazine synthase from Herpetosiphon aurantiacus (strain ATCC 23779 / DSM 785 / 114-95).